The sequence spans 628 residues: Putative pentatricopeptide repeat-containing protein At3g13770, mitochondrial (628 aa).

A mitochondrion-targeting transit peptide spans 1-19 (MFNLMRLIHRSFSSSPTNY). PPR repeat units follow at residues 51 to 85 (GFHG…RYLP), 86 to 116 (ATYL…MPEK), 117 to 151 (NVVS…DGKP), 152 to 186 (NEFT…NYDS), 187 to 217 (HIFV…LPER), 218 to 252 (DVVS…GMSP), 253 to 287 (NYVT…ELPF), 288 to 318 (YAVL…MPER), 319 to 353 (TAIS…KRVK), 355 to 389 (DAVT…EYGT), and 392 to 422 (GTEH…MPSK). Residues 427-502 (VLGSLLGACR…EPGRSWIQHE (76 aa)) form a type E motif region. A type E(+) motif region spans residues 503 to 533 (QTLHYFHANDRTHPRREEVLAKMKEISIKMK). Residues 534–628 (QAGYVPDLSC…DGICSCGDYW (95 aa)) form a type DYW motif region.

The protein belongs to the PPR family. PCMP-H subfamily.

It is found in the mitochondrion. The protein is Putative pentatricopeptide repeat-containing protein At3g13770, mitochondrial (PCMP-H85) of Arabidopsis thaliana (Mouse-ear cress).